The following is a 271-amino-acid chain: Short-chain type dehydrogenase/reductase (271 aa).

25-49 (IVTGASRGIGREIALNMAEKGAKVV) serves as a coordination point for NAD(+). Serine 166 is a binding site for substrate. The Proton acceptor role is filled by tyrosine 179.

It belongs to the short-chain dehydrogenases/reductases (SDR) family.

The chain is Short-chain type dehydrogenase/reductase from Picea abies (Norway spruce).